A 303-amino-acid polypeptide reads, in one-letter code: N-acetyl-D-glucosamine kinase (303 aa).

ATP contacts are provided by residues 4 to 11 (GFDIGGTK) and 133 to 140 (GVGGGLVL). The Zn(2+) site is built by His157, Cys177, Cys179, and Cys184.

It belongs to the ROK (NagC/XylR) family. NagK subfamily.

It catalyses the reaction N-acetyl-D-glucosamine + ATP = N-acetyl-D-glucosamine 6-phosphate + ADP + H(+). The protein operates within cell wall biogenesis; peptidoglycan recycling. In terms of biological role, catalyzes the phosphorylation of N-acetyl-D-glucosamine (GlcNAc) derived from cell-wall degradation, yielding GlcNAc-6-P. This is N-acetyl-D-glucosamine kinase from Salmonella paratyphi B (strain ATCC BAA-1250 / SPB7).